A 128-amino-acid chain; its full sequence is MKLAAIDVGLKRIGTAICLDGRIVMPQNAILRKNRNQAAHDVVSFLEEWEIEKLVVGLPKGGSSSEEMERRIQHFVSLLELDIPVVYQDEQGSSFEAKEMTQGQFRHKKDGKIDSIAAKIILERHLSL.

It belongs to the YqgF nuclease family.

The protein localises to the cytoplasm. In terms of biological role, could be a nuclease involved in processing of the 5'-end of pre-16S rRNA. The chain is Putative pre-16S rRNA nuclease from Sulfurovum sp. (strain NBC37-1).